Consider the following 392-residue polypeptide: Large ribosomal subunit protein uL3 (392 aa).

This sequence belongs to the universal ribosomal protein uL3 family.

The protein localises to the cytoplasm. In terms of biological role, the L3 protein is a component of the large subunit of cytoplasmic ribosomes. The chain is Large ribosomal subunit protein uL3 (rpl3) from Aspergillus fumigatus (strain ATCC MYA-4609 / CBS 101355 / FGSC A1100 / Af293) (Neosartorya fumigata).